The primary structure comprises 442 residues: F-box protein KIB2 (442 aa).

Positions 62 to 109 (SKQPVLVLDLLRSILERLSFVDFHRGRCISLEWYSASESCLAVKNPTS) constitute an F-box domain. A Nuclear localization signal motif is present at residues 236 to 243 (HKKGDENY).

Interacts with ASK7/BIN2/SK21.

It localises to the cytoplasm. The protein localises to the nucleus. It is found in the nucleolus. In terms of biological role, component of SCF(ASK-cullin-F-box) E3 ubiquitin ligase complexes, which may mediate the ubiquitination and subsequent proteasomal degradation of target proteins. Required for brassinosteroid (BR) signal transduction. Mediates ASK7/BIN2/SK21 inactivation both by competing with substrate binding (e.g. BZR1) and by promoting its ubiquitination and subsequent proteasomal degradation. The sequence is that of F-box protein KIB2 from Arabidopsis thaliana (Mouse-ear cress).